The chain runs to 541 residues: Protopine 6-monooxygenase (541 aa).

A helical transmembrane segment spans residues 9–29 (LLLNTWISAYSMAALLALVLV). Residue Cys-476 coordinates heme.

This sequence belongs to the cytochrome P450 family. Heme is required as a cofactor.

The protein resides in the endoplasmic reticulum membrane. The enzyme catalyses protopine + reduced [NADPH--hemoprotein reductase] + O2 = 6-hydroxyprotopine + oxidized [NADPH--hemoprotein reductase] + H2O + H(+). It participates in alkaloid biosynthesis. Its function is as follows. Catalyzes the conversion of protopine and allocryptopine to dihydrosanguinarine and dihydrochelerythrine, respectively, in the biosynthesis of isoquinoline alkaloid sanguinarine. The protein is Protopine 6-monooxygenase (CYP82N3) of Papaver somniferum (Opium poppy).